The sequence spans 467 residues: ATP synthase subunit beta (467 aa).

150-157 serves as a coordination point for ATP; it reads GGAGVGKT.

Belongs to the ATPase alpha/beta chains family. As to quaternary structure, F-type ATPases have 2 components, CF(1) - the catalytic core - and CF(0) - the membrane proton channel. CF(1) has five subunits: alpha(3), beta(3), gamma(1), delta(1), epsilon(1). CF(0) has three main subunits: a(1), b(2) and c(9-12). The alpha and beta chains form an alternating ring which encloses part of the gamma chain. CF(1) is attached to CF(0) by a central stalk formed by the gamma and epsilon chains, while a peripheral stalk is formed by the delta and b chains.

The protein localises to the cell inner membrane. The enzyme catalyses ATP + H2O + 4 H(+)(in) = ADP + phosphate + 5 H(+)(out). Produces ATP from ADP in the presence of a proton gradient across the membrane. The catalytic sites are hosted primarily by the beta subunits. The protein is ATP synthase subunit beta of Aliivibrio salmonicida (strain LFI1238) (Vibrio salmonicida (strain LFI1238)).